A 231-amino-acid chain; its full sequence is Enolase-phosphatase E1 (231 aa).

This sequence belongs to the HAD-like hydrolase superfamily. MasA/MtnC family. In terms of assembly, monomer. The cofactor is Mg(2+).

It catalyses the reaction 5-methylsulfanyl-2,3-dioxopentyl phosphate + H2O = 1,2-dihydroxy-5-(methylsulfanyl)pent-1-en-3-one + phosphate. It functions in the pathway amino-acid biosynthesis; L-methionine biosynthesis via salvage pathway; L-methionine from S-methyl-5-thio-alpha-D-ribose 1-phosphate: step 3/6. The protein operates within amino-acid biosynthesis; L-methionine biosynthesis via salvage pathway; L-methionine from S-methyl-5-thio-alpha-D-ribose 1-phosphate: step 4/6. Its function is as follows. Bifunctional enzyme that catalyzes the enolization of 2,3-diketo-5-methylthiopentyl-1-phosphate (DK-MTP-1-P) into the intermediate 2-hydroxy-3-keto-5-methylthiopentenyl-1-phosphate (HK-MTPenyl-1-P), which is then dephosphorylated to form the acireductone 1,2-dihydroxy-3-keto-5-methylthiopentene (DHK-MTPene). This chain is Enolase-phosphatase E1, found in Stenotrophomonas maltophilia (strain K279a).